A 357-amino-acid polypeptide reads, in one-letter code: Probable cinnamyl alcohol dehydrogenase 2 (357 aa).

C47 serves as a coordination point for Zn(2+). S49 is an NADP(+) binding site. Positions 69, 70, 100, 103, 106, 114, and 163 each coordinate Zn(2+). NADP(+) contacts are provided by residues T167, 188–193 (GLGGVG), 211–216 (SSSDKK), T251, G275, and 298–300 (SFI).

It belongs to the zinc-containing alcohol dehydrogenase family. In terms of assembly, homodimer. Requires Zn(2+) as cofactor.

It catalyses the reaction (E)-cinnamyl alcohol + NADP(+) = (E)-cinnamaldehyde + NADPH + H(+). The catalysed reaction is (E)-coniferol + NADP(+) = (E)-coniferaldehyde + NADPH + H(+). It carries out the reaction (E)-sinapyl alcohol + NADP(+) = (E)-sinapaldehyde + NADPH + H(+). The enzyme catalyses (E)-4-coumaroyl alcohol + NADP(+) = (E)-4-coumaraldehyde + NADPH + H(+). It catalyses the reaction (E)-caffeyl alcohol + NADP(+) = (E)-caffeyl aldehyde + NADPH + H(+). It functions in the pathway aromatic compound metabolism; phenylpropanoid biosynthesis. Functionally, involved in lignin biosynthesis. Catalyzes the final step specific for the production of lignin monomers. Catalyzes the NADPH-dependent reduction of coniferaldehyde, 5-hydroxyconiferaldehyde, sinapaldehyde, 4-coumaraldehyde and caffeyl aldehyde to their respective alcohols. The polypeptide is Probable cinnamyl alcohol dehydrogenase 2 (CAD2) (Picea abies (Norway spruce)).